Here is a 485-residue protein sequence, read N- to C-terminus: Glutamyl-tRNA(Gln) amidotransferase subunit A (485 aa).

Active-site charge relay system residues include lysine 78 and serine 153. Serine 177 (acyl-ester intermediate) is an active-site residue.

This sequence belongs to the amidase family. GatA subfamily. As to quaternary structure, heterotrimer of A, B and C subunits.

It catalyses the reaction L-glutamyl-tRNA(Gln) + L-glutamine + ATP + H2O = L-glutaminyl-tRNA(Gln) + L-glutamate + ADP + phosphate + H(+). Allows the formation of correctly charged Gln-tRNA(Gln) through the transamidation of misacylated Glu-tRNA(Gln) in organisms which lack glutaminyl-tRNA synthetase. The reaction takes place in the presence of glutamine and ATP through an activated gamma-phospho-Glu-tRNA(Gln). This chain is Glutamyl-tRNA(Gln) amidotransferase subunit A, found in Desulfotalea psychrophila (strain LSv54 / DSM 12343).